A 400-amino-acid chain; its full sequence is Keratin, type I cytoskeletal 19 (400 aa).

The head stretch occupies residues 1–79; sequence MTSYSYRQSS…TASDGLLAGN (79 aa). Arginine 7 is modified (omega-N-methylarginine). A phosphoserine mark is found at serine 14 and serine 22. Asymmetric dimethylarginine; alternate is present on arginine 24. Arginine 24 is subject to Omega-N-methylarginine; alternate. Arginine 32 bears the Omega-N-methylarginine mark. Serine 35 and serine 40 each carry phosphoserine. Residues arginine 43 and arginine 51 each carry the omega-N-methylarginine modification. Phosphoserine occurs at positions 57 and 72. Residues 80–115 form a coil 1A region; sequence EKLTMQNLNDRLASYLDKVRALEAANGELEVKIRDW. Residues 80 to 391 form the IF rod domain; the sequence is EKLTMQNLND…SLLEGQEDHY (312 aa). Residues 116-133 form a linker 1 region; that stretch reads YQKQGPGPSRDYSHYYTT. The coil 1B stretch occupies residues 134–225; the sequence is IQDLRDKILG…KNHEEEISTL (92 aa). The segment at 226-248 is linker 12; that stretch reads RGQVGGQVSVEVDSAPGTDLAKI. The interval 244–390 is necessary for interaction with PNN; it reads DLAKILSDMR…RSLLEGQEDH (147 aa). Residues 249–387 form a coil 2 region; that stretch reads LSDMRSQYEV…ATYRSLLEGQ (139 aa). Residue threonine 323 is modified to Phosphothreonine. Residues 388–400 are rod-like helical tail; it reads EDHYSNLSASKVL. Tyrosine 391 bears the Phosphotyrosine mark. Serine 395 bears the Phosphoserine mark.

It belongs to the intermediate filament family. In terms of assembly, heterotetramer of two type I and two type II keratins. Interacts with PNN and the actin-binding domain of DMD.

Involved in the organization of myofibers. Together with KRT8, helps to link the contractile apparatus to dystrophin at the costameres of striated muscle. The chain is Keratin, type I cytoskeletal 19 from Pongo abelii (Sumatran orangutan).